The following is a 496-amino-acid chain: Beta-amylase (496 aa).

Residues Asp-54, His-94, and Asp-102 each coordinate substrate. Catalysis depends on Glu-187, which acts as the Proton donor. Lys-296, His-301, and Thr-343 together coordinate substrate. The Proton acceptor role is filled by Glu-381. Substrate is bound by residues 382–383 (NA) and Arg-421. A disordered region spans residues 455–496 (YNHGIPPLKRSGPKIPDDVLNEATKPIPPFPWDSETDMKVDG).

Belongs to the glycosyl hydrolase 14 family.

It catalyses the reaction Hydrolysis of (1-&gt;4)-alpha-D-glucosidic linkages in polysaccharides so as to remove successive maltose units from the non-reducing ends of the chains.. The sequence is that of Beta-amylase (BMY1) from Medicago sativa (Alfalfa).